A 426-amino-acid polypeptide reads, in one-letter code: Adenylosuccinate synthetase (426 aa).

Residues 12-18 (GDEGKGK) and 40-42 (GHT) contribute to the GTP site. The Proton acceptor role is filled by Asp13. Asp13 and Gly40 together coordinate Mg(2+). Residues 13 to 16 (DEGK), 38 to 41 (NAGH), Thr131, Arg145, Gln226, Thr241, and Arg305 each bind IMP. The Proton donor role is filled by His41. 301-307 (ATTGRKR) contributes to the substrate binding site. GTP-binding positions include Arg307, 333-335 (KLD), and 415-417 (SVG).

The protein belongs to the adenylosuccinate synthetase family. As to quaternary structure, homodimer. Mg(2+) is required as a cofactor.

Its subcellular location is the cytoplasm. It catalyses the reaction IMP + L-aspartate + GTP = N(6)-(1,2-dicarboxyethyl)-AMP + GDP + phosphate + 2 H(+). The protein operates within purine metabolism; AMP biosynthesis via de novo pathway; AMP from IMP: step 1/2. Its function is as follows. Plays an important role in the de novo pathway of purine nucleotide biosynthesis. Catalyzes the first committed step in the biosynthesis of AMP from IMP. This is Adenylosuccinate synthetase from Nitratidesulfovibrio vulgaris (strain DP4) (Desulfovibrio vulgaris).